Reading from the N-terminus, the 103-residue chain is Large ribosomal subunit protein uL24 (103 aa).

This sequence belongs to the universal ribosomal protein uL24 family. As to quaternary structure, part of the 50S ribosomal subunit.

Its function is as follows. One of two assembly initiator proteins, it binds directly to the 5'-end of the 23S rRNA, where it nucleates assembly of the 50S subunit. One of the proteins that surrounds the polypeptide exit tunnel on the outside of the subunit. The sequence is that of Large ribosomal subunit protein uL24 from Endomicrobium trichonymphae.